The sequence spans 549 residues: Hydroxylamine reductase (549 aa).

Positions 3, 6, 18, and 25 each coordinate [2Fe-2S] cluster. Positions 248, 272, 316, 404, 432, 457, 491, and 493 each coordinate hybrid [4Fe-2O-2S] cluster. Position 404 is a cysteine persulfide (cysteine 404).

It belongs to the HCP family. [2Fe-2S] cluster serves as cofactor. Hybrid [4Fe-2O-2S] cluster is required as a cofactor.

It localises to the cytoplasm. It carries out the reaction A + NH4(+) + H2O = hydroxylamine + AH2 + H(+). In terms of biological role, catalyzes the reduction of hydroxylamine to form NH(3) and H(2)O. This Aeromonas hydrophila subsp. hydrophila (strain ATCC 7966 / DSM 30187 / BCRC 13018 / CCUG 14551 / JCM 1027 / KCTC 2358 / NCIMB 9240 / NCTC 8049) protein is Hydroxylamine reductase.